The primary structure comprises 122 residues: Large ribosomal subunit protein uL14 (122 aa).

This sequence belongs to the universal ribosomal protein uL14 family. As to quaternary structure, part of the 50S ribosomal subunit. Forms a cluster with proteins L3 and L19. In the 70S ribosome, L14 and L19 interact and together make contacts with the 16S rRNA in bridges B5 and B8.

In terms of biological role, binds to 23S rRNA. Forms part of two intersubunit bridges in the 70S ribosome. This chain is Large ribosomal subunit protein uL14, found in Fusobacterium nucleatum subsp. nucleatum (strain ATCC 25586 / DSM 15643 / BCRC 10681 / CIP 101130 / JCM 8532 / KCTC 2640 / LMG 13131 / VPI 4355).